A 155-amino-acid chain; its full sequence is Deoxyuridine 5'-triphosphate nucleotidohydrolase (155 aa).

Substrate contacts are provided by residues 74-76, Asn-87, and 91-93; these read RSG and LID.

Belongs to the dUTPase family. It depends on Mg(2+) as a cofactor.

It catalyses the reaction dUTP + H2O = dUMP + diphosphate + H(+). It functions in the pathway pyrimidine metabolism; dUMP biosynthesis; dUMP from dCTP (dUTP route): step 2/2. Its function is as follows. This enzyme is involved in nucleotide metabolism: it produces dUMP, the immediate precursor of thymidine nucleotides and it decreases the intracellular concentration of dUTP so that uracil cannot be incorporated into DNA. This Xanthomonas oryzae pv. oryzae (strain PXO99A) protein is Deoxyuridine 5'-triphosphate nucleotidohydrolase.